The sequence spans 468 residues: 3-isopropylmalate dehydratase large subunit (468 aa).

3 residues coordinate [4Fe-4S] cluster: Cys-349, Cys-409, and Cys-412.

This sequence belongs to the aconitase/IPM isomerase family. LeuC type 1 subfamily. In terms of assembly, heterodimer of LeuC and LeuD. The cofactor is [4Fe-4S] cluster.

It catalyses the reaction (2R,3S)-3-isopropylmalate = (2S)-2-isopropylmalate. Its pathway is amino-acid biosynthesis; L-leucine biosynthesis; L-leucine from 3-methyl-2-oxobutanoate: step 2/4. Its function is as follows. Catalyzes the isomerization between 2-isopropylmalate and 3-isopropylmalate, via the formation of 2-isopropylmaleate. The chain is 3-isopropylmalate dehydratase large subunit from Nitrobacter hamburgensis (strain DSM 10229 / NCIMB 13809 / X14).